A 399-amino-acid polypeptide reads, in one-letter code: Argininosuccinate synthase (399 aa).

ATP is bound by residues Ala-10–Ser-18 and Ala-38. Tyr-89 contributes to the L-citrulline binding site. An ATP-binding site is contributed by Gly-119. The L-aspartate site is built by Thr-121, Asn-125, and Asp-126. Asn-125 is an L-citrulline binding site. L-citrulline contacts are provided by Arg-129, Ser-177, Ser-186, Glu-262, and Tyr-274.

The protein belongs to the argininosuccinate synthase family. Type 1 subfamily. Homotetramer.

Its subcellular location is the cytoplasm. It carries out the reaction L-citrulline + L-aspartate + ATP = 2-(N(omega)-L-arginino)succinate + AMP + diphosphate + H(+). The protein operates within amino-acid biosynthesis; L-arginine biosynthesis; L-arginine from L-ornithine and carbamoyl phosphate: step 2/3. The sequence is that of Argininosuccinate synthase from Rippkaea orientalis (strain PCC 8801 / RF-1) (Cyanothece sp. (strain PCC 8801)).